A 435-amino-acid polypeptide reads, in one-letter code: ATP-dependent RNA helicase SUB2 (435 aa).

The segment at 1 to 40 is disordered; the sequence is MSHEGQEELLDYSDSEEIAVPTTTAPSAAAGEGANDKEAD. Over residues 7–17 the composition is skewed to acidic residues; it reads EELLDYSDSEE. Residues 19–33 are compositionally biased toward low complexity; that stretch reads AVPTTTAPSAAAGEG. Positions 51–79 match the Q motif motif; it reads TGFRDFLLKPELLRAIGDCGFEHPSEVQQ. The 176-residue stretch at 82 to 257 folds into the Helicase ATP-binding domain; that stretch reads IPQSILGTDV…KKFMQNPLEI (176 aa). An ATP-binding site is contributed by 95-102; sequence AKSGLGKT. The DECD box signature appears at 204 to 207; it reads DECD. Residues 269-430 form the Helicase C-terminal domain; it reads GLQQYYIKLD…EFPEEGVDPS (162 aa).

This sequence belongs to the DEAD box helicase family. DECD subfamily.

The protein localises to the nucleus. It carries out the reaction ATP + H2O = ADP + phosphate + H(+). ATP-binding RNA helicase involved in transcription elongation and required for the export of mRNA out of the nucleus. SUB2 also plays a role in pre-mRNA splicing and spliceosome assembly. May be involved in rDNA and telomeric silencing, and maintenance of genome integrity. The chain is ATP-dependent RNA helicase SUB2 (SUB2) from Debaryomyces hansenii (strain ATCC 36239 / CBS 767 / BCRC 21394 / JCM 1990 / NBRC 0083 / IGC 2968) (Yeast).